Reading from the N-terminus, the 314-residue chain is Hydroxyethylthiazole kinase (314 aa).

Met70 contacts substrate. The ATP site is built by Arg145 and Ser217. Gly244 provides a ligand contact to substrate.

Belongs to the Thz kinase family. The cofactor is Mg(2+).

The enzyme catalyses 5-(2-hydroxyethyl)-4-methylthiazole + ATP = 4-methyl-5-(2-phosphooxyethyl)-thiazole + ADP + H(+). It participates in cofactor biosynthesis; thiamine diphosphate biosynthesis; 4-methyl-5-(2-phosphoethyl)-thiazole from 5-(2-hydroxyethyl)-4-methylthiazole: step 1/1. Its function is as follows. Catalyzes the phosphorylation of the hydroxyl group of 4-methyl-5-beta-hydroxyethylthiazole (THZ). The chain is Hydroxyethylthiazole kinase from Bifidobacterium longum (strain NCC 2705).